Consider the following 241-residue polypeptide: ATP synthase subunit a (241 aa).

5 helical membrane passes run 30 to 50 (GQVF…ISLG), 91 to 111 (FIGT…LIPW), 128 to 148 (INTT…AGLS), 193 to 213 (LVVG…VMFL), and 214 to 234 (GLFT…YYIG).

The protein belongs to the ATPase A chain family. F-type ATPases have 2 components, CF(1) - the catalytic core - and CF(0) - the membrane proton channel. CF(1) has five subunits: alpha(3), beta(3), gamma(1), delta(1), epsilon(1). CF(0) has four main subunits: a, b, b' and c.

Its subcellular location is the cellular thylakoid membrane. Functionally, key component of the proton channel; it plays a direct role in the translocation of protons across the membrane. This chain is ATP synthase subunit a, found in Prochlorococcus marinus (strain MIT 9215).